The chain runs to 991 residues: UvrABC system protein A (991 aa).

48–55 (GLSGSGKS) contributes to the ATP binding site. ABC transporter domains lie at 345–624 (WAKS…PKSL) and 644–972 (NHRR…KFLE). 676 to 683 (GVSGGGKS) is an ATP binding site. A C4-type zinc finger spans residues 775 to 801 (CEACQGDGVIKIEMHFLPDVYVTCDVC).

It belongs to the ABC transporter superfamily. UvrA family. Forms a heterotetramer with UvrB during the search for lesions.

It is found in the cytoplasm. In terms of biological role, the UvrABC repair system catalyzes the recognition and processing of DNA lesions. UvrA is an ATPase and a DNA-binding protein. A damage recognition complex composed of 2 UvrA and 2 UvrB subunits scans DNA for abnormalities. When the presence of a lesion has been verified by UvrB, the UvrA molecules dissociate. This is UvrABC system protein A from Bradyrhizobium diazoefficiens (strain JCM 10833 / BCRC 13528 / IAM 13628 / NBRC 14792 / USDA 110).